We begin with the raw amino-acid sequence, 664 residues long: Sulfoquinovosidase (664 aa).

Residues E135, E270, R283, L284, and W286 each coordinate 3-(6-sulfo-alpha-D-quinovosyl)glycerol. D388 acts as the Nucleophile in catalysis. E391 is a catalytic residue. R438 lines the 3-(6-sulfo-alpha-D-quinovosyl)glycerol pocket. The active-site Proton donor is the D455. Position 520 (H520) interacts with 3-(6-sulfo-alpha-D-quinovosyl)glycerol.

Belongs to the glycosyl hydrolase 31 family.

It carries out the reaction 3-(6-sulfo-alpha-D-quinovosyl)glycerol + H2O = 6-sulfo-alpha-D-quinovose + glycerol. In terms of biological role, part of the sulfoquinovose monooxygenase (sulfo-SMO) pathway, a D-sulfoquinovose degradation pathway that enables the complete utilization of all carbons within sulfoquinovose (SQ) with concomitant production of inorganic sulfite. Catalyzes the first step of the pathway, the hydrolysis of sulfoquinovosyl glycerol (SQGro) to release sulfoquinovose (SQ). Hydrolyzes both epimers of SQGro, with a preference for the natural 2'R isomer. In vitro, can use the substrate analog para-nitrophenyl alpha-sulfoquinovoside (PNPSQ), but shows no detectable activity toward 4-nitrophenyl alpha-D-glucopyranoside (PNPGlc). The chain is Sulfoquinovosidase from Agrobacterium fabrum (strain C58 / ATCC 33970) (Agrobacterium tumefaciens (strain C58)).